A 412-amino-acid chain; its full sequence is F-box/WD repeat-containing protein 4 (412 aa).

The F-box domain maps to 25-71 (GPALWRLPEELLLLICSYLDMRALGRLAQVCRWLRRFTSCDLLWRRI). 6 WD repeats span residues 154-190 (RPLG…IHKI), 193-229 (TFTV…VWPL), 236-277 (QCLH…IWDL), 283-321 (MTHL…YWDL), 327-366 (KCVM…LWDR), and 373-409 (HAFP…VLDF).

Part of a SCF (SKP1-cullin-F-box) protein ligase complex. Interacts with POUF51. In terms of tissue distribution, expressed in brain, kidney, lung and liver.

Its function is as follows. Probably recognizes and binds to some phosphorylated proteins and promotes their ubiquitination and degradation. Likely to be involved in key signaling pathways crucial for normal limb development. May participate in Wnt signaling. The chain is F-box/WD repeat-containing protein 4 (FBXW4) from Homo sapiens (Human).